The primary structure comprises 446 residues: Tubulin beta-1 chain (446 aa).

An MREI motif motif is present at residues 1 to 4 (MREI). GTP contacts are provided by Gln11, Glu69, Ser138, Gly142, Thr143, Gly144, Asn204, and Asn226. Residue Glu69 participates in Mg(2+) binding. The segment at 426–446 (QDATAEEEGEFEEEGEYEDGA) is disordered. The span at 429-446 (TAEEEGEFEEEGEYEDGA) shows a compositional bias: acidic residues. Glu438 is modified (5-glutamyl polyglutamate).

This sequence belongs to the tubulin family. Dimer of alpha and beta chains. A typical microtubule is a hollow water-filled tube with an outer diameter of 25 nm and an inner diameter of 15 nM. Alpha-beta heterodimers associate head-to-tail to form protofilaments running lengthwise along the microtubule wall with the beta-tubulin subunit facing the microtubule plus end conferring a structural polarity. Microtubules usually have 13 protofilaments but different protofilament numbers can be found in some organisms and specialized cells. Requires Mg(2+) as cofactor. In terms of processing, some glutamate residues at the C-terminus are polyglycylated, resulting in polyglycine chains on the gamma-carboxyl group. Glycylation is mainly limited to tubulin incorporated into axonemes (cilia and flagella) whereas glutamylation is prevalent in neuronal cells, centrioles, axonemes, and the mitotic spindle. Both modifications can coexist on the same protein on adjacent residues, and lowering polyglycylation levels increases polyglutamylation, and reciprocally. The precise function of polyglycylation is still unclear. Post-translationally, some glutamate residues at the C-terminus are polyglutamylated, resulting in polyglutamate chains on the gamma-carboxyl group. Polyglutamylation plays a key role in microtubule severing by spastin (SPAST). SPAST preferentially recognizes and acts on microtubules decorated with short polyglutamate tails: severing activity by SPAST increases as the number of glutamates per tubulin rises from one to eight, but decreases beyond this glutamylation threshold. In terms of tissue distribution, brain.

The protein resides in the cytoplasm. Its subcellular location is the cytoskeleton. Tubulin is the major constituent of microtubules, a cylinder consisting of laterally associated linear protofilaments composed of alpha- and beta-tubulin heterodimers. Microtubules grow by the addition of GTP-tubulin dimers to the microtubule end, where a stabilizing cap forms. Below the cap, tubulin dimers are in GDP-bound state, owing to GTPase activity of alpha-tubulin. The protein is Tubulin beta-1 chain (tubb1) of Notothenia neglecta (Yellowbelly rockcod).